Here is a 619-residue protein sequence, read N- to C-terminus: MDKQSKFRIKTFFKKIIFFLIIFCFFYFFNFIKKTKKITHTTQDKFFELLSKNKINKFIVLNKKKVSFTLNEKKSHLDSNNYNFFSKLHLSRYEFEIGDLQLFQKKIDFYKELYEINPNFEFKNYKIYTVLNFFYDYGFFLMIIIICWIFIFRKIASRSSESEFKFKIGKSKAKLYYYNNITFKDVAGLEGPKEEIKEIVDFLKSPNKYTKLGGKIPKGALLIGPPGTGKTLLAKAVAGEAQVPFFSLSGSDFVEMFVGVGASRVRDLFYIAKLKSPSIIFIDEIDAIGRARIKNNIPGGNDERENTLNKLLTEMDGFSTKTNVIVLAATNRYDVLDDALLRSGRFDRTIFIDLPSLKERKDIMKVHLKKIKFSKSIDLDFISRQIPGFSGADISNICNEAALLAARRNKVKVETKDFIDTIYRRIGGIEKKNILIKKNEKKRIAYHETGHAIISWIIEYAHSVFQITITPRGQSLGAAWYIPEERQITTEDQMKDEICTLLGGRAAEYLIFNNKSTGALNDLERITKQAQSMVKFFGLSSLGNISYFDSTGRNDFSLEKAYSEKTSEIIDKEINKIIKEQYKRALEILKKNYDKLIFLAEKLFKKEVLFKEDFASILD.

Topologically, residues 1 to 11 (MDKQSKFRIKT) are cytoplasmic. Residues 12 to 32 (FFKKIIFFLIIFCFFYFFNFI) form a helical membrane-spanning segment. Residues 33–131 (KKTKKITHTT…FKNYKIYTVL (99 aa)) lie on the Periplasmic side of the membrane. The chain crosses the membrane as a helical span at residues 132–152 (NFFYDYGFFLMIIIICWIFIF). Over 153 to 619 (RKIASRSSES…FKEDFASILD (467 aa)) the chain is Cytoplasmic. 224-231 (GPPGTGKT) contributes to the ATP binding site. Histidine 447 is a binding site for Zn(2+). Glutamate 448 is a catalytic residue. Positions 451 and 522 each coordinate Zn(2+).

This sequence in the central section; belongs to the AAA ATPase family. The protein in the C-terminal section; belongs to the peptidase M41 family. In terms of assembly, homohexamer. It depends on Zn(2+) as a cofactor.

It is found in the cell inner membrane. Its function is as follows. Acts as a processive, ATP-dependent zinc metallopeptidase for both cytoplasmic and membrane proteins. Plays a role in the quality control of integral membrane proteins. This Karelsulcia muelleri (strain DMIN) (Sulcia muelleri) protein is ATP-dependent zinc metalloprotease FtsH.